Here is a 184-residue protein sequence, read N- to C-terminus: Homeobox protein LOX10 (184 aa).

Disordered regions lie at residues 1-29 and 129-184; these read KIVSRWMGSQNNHQQTHPNHHHHLPPLQH and YKTK…NKPG. Positions 76–135 form a DNA-binding region, homeobox; it reads RRKRRILFSQAQIYELERRFRQQKYLSAPEREHLATFIGLTPTQVKIWFQNHRYKTKKSK. Low complexity-rich tracts occupy residues 140–161 and 174–184; these read NSPSSSSMTSSSSASNKVASTT and SNTTNNNNKPG.

This sequence belongs to the NK-2 homeobox family. As to expression, expressed in a segmental pattern in the endoderm and in the cephalic nervous system.

Its subcellular location is the nucleus. Its function is as follows. May play a role in patterning the gut. The chain is Homeobox protein LOX10 (LOX10) from Helobdella triserialis (Leech).